We begin with the raw amino-acid sequence, 991 residues long: Glutamate receptor 1 (991 aa).

Residues 1–27 (MHSRLKFLAYLHFICASSIFWPEFSSA) form the signal peptide. Over 28-611 (QQQQQTVSLT…VFSFLNPLSQ (584 aa)) the chain is Extracellular. N-linked (GlcNAc...) asparagine glycosylation is found at Asn67, Asn195, Asn208, and Asn281. Disordered regions lie at residues 300-321 (DSRKRLEPSGQSQSQNAGGPNS) and 354-379 (FRSNHLQRRSHGGSSSSSATGTNESS). Over residues 308–318 (SGQSQSQNAGG) the composition is skewed to polar residues. A compositionally biased stretch (low complexity) spans 365–379 (GGSSSSSATGTNESS). N-linked (GlcNAc...) asparagine glycosylation is found at Asn376, Asn385, Asn426, Asn437, and Asn477. The helical transmembrane segment at 612 to 632 (EIWISVILSYVGVSFVLYFVT) threads the bilayer. The Cytoplasmic segment spans residues 633 to 710 (RFPPYEWRIV…PSIAGRIAAA (78 aa)). A helical transmembrane segment spans residues 711-731 (VWWFFTIILISSYTANLAAFL). Topologically, residues 732–895 (TVERMVAPIK…STPNELSLSN (164 aa)) are extracellular. Residues 896–916 (VAGIYYILIGGLLLAVIVAIM) form a helical membrane-spanning segment. The Cytoplasmic segment spans residues 917–991 (EFFCRNKTPQ…ASNVRYQYSM (75 aa)).

Belongs to the glutamate-gated ion channel (TC 1.A.10.1) family. As to quaternary structure, homooligomer. In terms of tissue distribution, central nervous system.

The protein localises to the cell membrane. The protein resides in the postsynaptic cell membrane. Functionally, receptor for glutamate. L-glutamate acts as an excitatory neurotransmitter at many synapses in the central nervous system. The postsynaptic actions of Glu are mediated by a variety of receptors that are named according to their selective agonists. Forms ligand-gated ion channels which are activated by kainate. The sequence is that of Glutamate receptor 1 (GluRIA) from Drosophila melanogaster (Fruit fly).